The chain runs to 591 residues: NADP-dependent malic enzyme (591 aa).

Residue tyrosine 139 is the Proton donor of the active site. An NAD(+)-binding site is contributed by arginine 192. Lysine 210 (proton acceptor) is an active-site residue. Residues glutamate 282, aspartate 283, and aspartate 306 each coordinate a divalent metal cation. Aspartate 306 serves as a coordination point for NAD(+). NADP(+) is bound at residue 335 to 351 (LFLGAGEAGTGIAELIA). Asparagine 447 lines the NAD(+) pocket.

Belongs to the malic enzymes family. In terms of assembly, homotetramer. The cofactor is Mg(2+). Mn(2+) is required as a cofactor.

It is found in the cytoplasm. The catalysed reaction is (S)-malate + NADP(+) = pyruvate + CO2 + NADPH. It catalyses the reaction oxaloacetate + H(+) = pyruvate + CO2. In Vitis vinifera (Grape), this protein is NADP-dependent malic enzyme.